The primary structure comprises 76 residues: MKLTCMMIIAVLFLTAWTFATADDSGNGLENLFSKAHHEMKNPEASKLNKRCLAKGDFCNLITQDCCDGICFIFCP.

Positions 1-22 are cleaved as a signal peptide; it reads MKLTCMMIIAVLFLTAWTFATA. 3 disulfide bridges follow: cysteine 52-cysteine 67, cysteine 59-cysteine 71, and cysteine 66-cysteine 75.

The protein belongs to the conotoxin O1 superfamily. Is not hydroxylated. In terms of tissue distribution, expressed by the venom duct.

The protein resides in the secreted. Functionally, probable toxin that inhibits ion channels. The sequence is that of Conotoxin Am6.3 from Conus amadis (Amadis cone).